Reading from the N-terminus, the 82-residue chain is uncharacterized protein (82 aa).

This is an uncharacterized protein from Saccharomyces cerevisiae (strain ATCC 204508 / S288c) (Baker's yeast).